A 426-amino-acid polypeptide reads, in one-letter code: Adenylosuccinate synthetase (426 aa).

Residues 12–18 (GDEGKGK) and 40–42 (GHT) each bind GTP. The active-site Proton acceptor is the Asp-13. Asp-13 and Gly-40 together coordinate Mg(2+). Residues 13-16 (DEGK), 38-41 (NAGH), Thr-131, Arg-145, Gln-226, Thr-241, and Arg-305 each bind IMP. His-41 (proton donor) is an active-site residue. Position 301-307 (301-307 (ATTGRKR)) interacts with substrate. GTP contacts are provided by residues Arg-307, 333–335 (KLD), and 415–417 (SVG).

This sequence belongs to the adenylosuccinate synthetase family. In terms of assembly, homodimer. The cofactor is Mg(2+).

The protein localises to the cytoplasm. The catalysed reaction is IMP + L-aspartate + GTP = N(6)-(1,2-dicarboxyethyl)-AMP + GDP + phosphate + 2 H(+). It participates in purine metabolism; AMP biosynthesis via de novo pathway; AMP from IMP: step 1/2. In terms of biological role, plays an important role in the de novo pathway of purine nucleotide biosynthesis. Catalyzes the first committed step in the biosynthesis of AMP from IMP. This chain is Adenylosuccinate synthetase, found in Nitratidesulfovibrio vulgaris (strain DP4) (Desulfovibrio vulgaris).